Here is a 374-residue protein sequence, read N- to C-terminus: MSKGIVLLAAGGTGGHVFPAEALAFKLKERGYSVHLVTDSRAERYAGKFPAEEIHVVPSATIGSKNPVAVARSLWTLWSGMRAAKKLIQRLKPVIVVGFGGYPTVPPLLAATRLGVPTMIHEQNAVMGRANKALATRVQGIAGGFLPEGGGAFPEKTVTTGNPVRPAIIAAAEVPYTPSHPGEAFNLVVFGGSQGAQYFSKALPTAISLLDDALRLRLRITQQVRPEDMEMVGGCVAKLEMGADIAPFFTDMAERLAKAHLVICRSGASTVSEISVIGRPAVLVPYPHALDHDQAANAAALAATGGAKVIAQSELSPEKIAAILTAVMNDPEKLSHMAAAAKLAGKPDAANLLADMVEAIAAGRTIAELKRTRA.

UDP-N-acetyl-alpha-D-glucosamine-binding positions include 13–15 (TGG), asparagine 124, arginine 165, serine 193, and glutamine 294.

This sequence belongs to the glycosyltransferase 28 family. MurG subfamily.

It is found in the cell inner membrane. The enzyme catalyses di-trans,octa-cis-undecaprenyl diphospho-N-acetyl-alpha-D-muramoyl-L-alanyl-D-glutamyl-meso-2,6-diaminopimeloyl-D-alanyl-D-alanine + UDP-N-acetyl-alpha-D-glucosamine = di-trans,octa-cis-undecaprenyl diphospho-[N-acetyl-alpha-D-glucosaminyl-(1-&gt;4)]-N-acetyl-alpha-D-muramoyl-L-alanyl-D-glutamyl-meso-2,6-diaminopimeloyl-D-alanyl-D-alanine + UDP + H(+). Its pathway is cell wall biogenesis; peptidoglycan biosynthesis. In terms of biological role, cell wall formation. Catalyzes the transfer of a GlcNAc subunit on undecaprenyl-pyrophosphoryl-MurNAc-pentapeptide (lipid intermediate I) to form undecaprenyl-pyrophosphoryl-MurNAc-(pentapeptide)GlcNAc (lipid intermediate II). This Rhizobium leguminosarum bv. trifolii (strain WSM2304) protein is UDP-N-acetylglucosamine--N-acetylmuramyl-(pentapeptide) pyrophosphoryl-undecaprenol N-acetylglucosamine transferase.